Reading from the N-terminus, the 396-residue chain is NAD(P)H oxidoreductase RTN4IP1, mitochondrial (396 aa).

The N-terminal 40 residues, Met1–Ser40, are a transit peptide targeting the mitochondrion. The Enoyl reductase (ER) domain maps to Gly52–Ile393. NADPH is bound by residues Ser214, Gly216, Val217, Ser237, Tyr255, Asn276, Leu300, Ala341, Phe343, His386, Ala387, and Arg388.

The protein belongs to the zinc-containing alcohol dehydrogenase family. Quinone oxidoreductase subfamily. In terms of assembly, interacts with RTN4, UQCRC1 and UQCRC2. As to expression, widely expressed in mitochondria-enriched tissues. Found in heart, muscle, kidney, liver, brain and placenta.

It is found in the mitochondrion matrix. The protein resides in the mitochondrion outer membrane. The enzyme catalyses a 3-demethylubiquinone + NADH + 2 H(+) = a 3-demethylubiquinol + NAD(+). It catalyses the reaction a 3-demethylubiquinone + NADPH + 2 H(+) = a 3-demethylubiquinol + NADP(+). The catalysed reaction is 3-demethylubiquinone-10 + NADH + 2 H(+) = 3-demethylubiquinol-10 + NAD(+). It carries out the reaction 3-demethylubiquinone-10 + NADPH + 2 H(+) = 3-demethylubiquinol-10 + NADP(+). It functions in the pathway cofactor biosynthesis; ubiquinone biosynthesis. Functionally, NAD(P)H oxidoreductase involved in the ubiquinone biosynthetic pathway. Required for the O-methyltransferase activity of COQ3. Able to catalyze the oxidoreduction of 3-demethylubiquinone into 3-demethylubiquinol in vitro. However, it is unclear if 3-demethylubiquinone constitutes a substrate in vivo. May also play a role in the regulation of retinal ganglion cell (RGC) neurite outgrowth, and hence in the development of the inner retina and optic nerve. Appears to be a potent inhibitor of regeneration following spinal cord injury. The sequence is that of NAD(P)H oxidoreductase RTN4IP1, mitochondrial from Homo sapiens (Human).